We begin with the raw amino-acid sequence, 227 residues long: Cytochrome c oxidase subunit 2 (227 aa).

Residues 1-14 lie on the Mitochondrial intermembrane side of the membrane; that stretch reads MAYPLQLGLQDATS. A helical transmembrane segment spans residues 15–45; it reads PIMEELMNFHDHTLMIVFLISSLVLYIISLM. Residues 46-59 are Mitochondrial matrix-facing; the sequence is LTTKLTHTSTMDAQ. Residues 60–87 traverse the membrane as a helical segment; it reads EVETIWTILPAVILIMIALPSLRILYMM. Topologically, residues 88-227 are mitochondrial intermembrane; sequence DEINNPVLTV…HFENWSASMI (140 aa). His-161, Cys-196, Glu-198, Cys-200, His-204, and Met-207 together coordinate Cu cation. Mg(2+) is bound at residue Glu-198.

Belongs to the cytochrome c oxidase subunit 2 family. As to quaternary structure, component of the cytochrome c oxidase (complex IV, CIV), a multisubunit enzyme composed of 14 subunits. The complex is composed of a catalytic core of 3 subunits MT-CO1, MT-CO2 and MT-CO3, encoded in the mitochondrial DNA, and 11 supernumerary subunits COX4I, COX5A, COX5B, COX6A, COX6B, COX6C, COX7A, COX7B, COX7C, COX8 and NDUFA4, which are encoded in the nuclear genome. The complex exists as a monomer or a dimer and forms supercomplexes (SCs) in the inner mitochondrial membrane with NADH-ubiquinone oxidoreductase (complex I, CI) and ubiquinol-cytochrome c oxidoreductase (cytochrome b-c1 complex, complex III, CIII), resulting in different assemblies (supercomplex SCI(1)III(2)IV(1) and megacomplex MCI(2)III(2)IV(2)). Found in a complex with TMEM177, COA6, COX18, COX20, SCO1 and SCO2. Interacts with TMEM177 in a COX20-dependent manner. Interacts with COX20. Interacts with COX16. The cofactor is Cu cation.

The protein resides in the mitochondrion inner membrane. It catalyses the reaction 4 Fe(II)-[cytochrome c] + O2 + 8 H(+)(in) = 4 Fe(III)-[cytochrome c] + 2 H2O + 4 H(+)(out). In terms of biological role, component of the cytochrome c oxidase, the last enzyme in the mitochondrial electron transport chain which drives oxidative phosphorylation. The respiratory chain contains 3 multisubunit complexes succinate dehydrogenase (complex II, CII), ubiquinol-cytochrome c oxidoreductase (cytochrome b-c1 complex, complex III, CIII) and cytochrome c oxidase (complex IV, CIV), that cooperate to transfer electrons derived from NADH and succinate to molecular oxygen, creating an electrochemical gradient over the inner membrane that drives transmembrane transport and the ATP synthase. Cytochrome c oxidase is the component of the respiratory chain that catalyzes the reduction of oxygen to water. Electrons originating from reduced cytochrome c in the intermembrane space (IMS) are transferred via the dinuclear copper A center (CU(A)) of subunit 2 and heme A of subunit 1 to the active site in subunit 1, a binuclear center (BNC) formed by heme A3 and copper B (CU(B)). The BNC reduces molecular oxygen to 2 water molecules using 4 electrons from cytochrome c in the IMS and 4 protons from the mitochondrial matrix. This is Cytochrome c oxidase subunit 2 (MT-CO2) from Zelotomys hildegardeae (Hildegarde's broad-headed mouse).